Reading from the N-terminus, the 652-residue chain is MENRMNELVSLLNQYAKEYYTQDNPTVSDSQYDQLYRELVELEKQHPENILPNSPTHRVGGLVLEGFEKYQHEYPLYSLQDAFSKEELIAFDKRVKAEFPTAAYMAELKIDGLSVSLTYVNGVLQVGATRGDGNIGENITENLKRVHDIPLHLDQSLDITVRGECYLPKESFEAINIEKRANGEQEFANPRNAAAGTLRQLNTGIVAKRKLATFLYQEASPTQKETQDDVLKELESYGFSVNHHRLISSSMEKIWDFIQTIEKDRVSLPYDIDGIVIKVNSIAMQEELGFTVKAPRWAIAYKFPAEEKEAEILSVDWTVGRTGVVTPTANLTPVQLAGTTVSRATLHNVDYIAEKDIRIGDTVVVYKAGDIIPAVLNVVMSKRNQQEVMLIPKLCPSCGSELVHFEGEVALRCINPLCPNQIKERLAHFASRDAMNITGFGPSLVEKLFDAHLIADVADIYRLSIENLLTLDGIKEKSATKIYHAIQSSKENSAEKLLFGLGIRHVGSKASRLLLEEFGNLRQLSQASQESIASIDGLGGVIAKSLHTFFEKEEVDKLLEELTSYNVNFNYLGKRVSTDAQLSGLTVVLTGKLEKMTRNEAKEKLQNLGAKVTGSVSKKTDLIVAGSDAGSKLTKAQDLGITIQDEDWLLNL.

Residues 29-33, 78-79, and E107 each bind NAD(+); these read DSQYD and SL. Residue K109 is the N6-AMP-lysine intermediate of the active site. NAD(+) contacts are provided by R130, E164, K278, and K302. Zn(2+) is bound by residues C395, C398, C413, and C418. Positions 577-652 constitute a BRCT domain; sequence STDAQLSGLT…IQDEDWLLNL (76 aa).

Belongs to the NAD-dependent DNA ligase family. LigA subfamily. Mg(2+) is required as a cofactor. It depends on Mn(2+) as a cofactor.

It carries out the reaction NAD(+) + (deoxyribonucleotide)n-3'-hydroxyl + 5'-phospho-(deoxyribonucleotide)m = (deoxyribonucleotide)n+m + AMP + beta-nicotinamide D-nucleotide.. DNA ligase that catalyzes the formation of phosphodiester linkages between 5'-phosphoryl and 3'-hydroxyl groups in double-stranded DNA using NAD as a coenzyme and as the energy source for the reaction. It is essential for DNA replication and repair of damaged DNA. This chain is DNA ligase, found in Streptococcus agalactiae serotype V (strain ATCC BAA-611 / 2603 V/R).